The chain runs to 122 residues: Basic phospholipase A2 LmTX-II (122 aa).

Cystine bridges form between C26–C115, C28–C44, C43–C95, C49–C122, C50–C88, and C75–C86. Ca(2+) is bound by residues Y27, G29, and G31. H47 is an active-site residue. D48 lines the Ca(2+) pocket. D89 is a catalytic residue.

In terms of assembly, monomer. Ca(2+) is required as a cofactor. In terms of tissue distribution, expressed by the venom gland.

It is found in the secreted. It catalyses the reaction a 1,2-diacyl-sn-glycero-3-phosphocholine + H2O = a 1-acyl-sn-glycero-3-phosphocholine + a fatty acid + H(+). Snake venom phospholipase A2 (PLA2) that may display neurotoxic and myotoxic activities. May induce inflammatory edema by mechanisms involving mast cell activation and arachidonic acid metabolites. May increase plasma creatine kinase activity. PLA2 catalyzes the calcium-dependent hydrolysis of the 2-acyl groups in 3-sn-phosphoglycerides. The polypeptide is Basic phospholipase A2 LmTX-II (Lachesis muta muta (Bushmaster)).